The chain runs to 107 residues: Protein Asterix (107 aa).

The span at 1-15 shows a compositional bias: polar residues; the sequence is MSHSHGNASSVNDPR. A disordered region spans residues 1 to 25; the sequence is MSHSHGNASSVNDPRQPSAAKPYIP. A helical membrane pass occupies residues 82–98; that stretch reads ISMAMMFAIMGLVTNYL.

Belongs to the Asterix family.

It is found in the membrane. This is Protein Asterix from Arabidopsis thaliana (Mouse-ear cress).